Reading from the N-terminus, the 158-residue chain is Proteinase inhibitor type-2 (158 aa).

The first 24 residues, 1–24 (MAIHKEVSFLAYLLVLGMLLFVSA), serve as a signal peptide directing secretion. 2 tandem repeats follow at residues 29–86 (DAKA…HPKN) and 87–146 (PKAC…IEPK). Intrachain disulfides connect Cys-33–Cys-121, Cys-37–Cys-117, Cys-45–Cys-127, Cys-57–Cys-94, Cys-60–Cys-78, Cys-61–Cys-90, Cys-67–Cys-103, and Cys-120–Cys-138.

Belongs to the protease inhibitor I20 (potato type II proteinase inhibitor) family.

The sequence is that of Proteinase inhibitor type-2 from Solanum tuberosum (Potato).